The sequence spans 451 residues: tRNA modification GTPase MnmE (451 aa).

Positions 37, 95, and 135 each coordinate (6S)-5-formyl-5,6,7,8-tetrahydrofolate. A TrmE-type G domain is found at glycine 232–glycine 376. Asparagine 242 is a K(+) binding site. Residues asparagine 242 to threonine 247, serine 261 to threonine 267, and aspartate 286 to glycine 289 contribute to the GTP site. Serine 246 is a binding site for Mg(2+). Positions 261, 263, and 266 each coordinate K(+). Threonine 267 contributes to the Mg(2+) binding site. Lysine 451 provides a ligand contact to (6S)-5-formyl-5,6,7,8-tetrahydrofolate.

This sequence belongs to the TRAFAC class TrmE-Era-EngA-EngB-Septin-like GTPase superfamily. TrmE GTPase family. As to quaternary structure, homodimer. Heterotetramer of two MnmE and two MnmG subunits. K(+) is required as a cofactor.

The protein resides in the cytoplasm. Exhibits a very high intrinsic GTPase hydrolysis rate. Involved in the addition of a carboxymethylaminomethyl (cmnm) group at the wobble position (U34) of certain tRNAs, forming tRNA-cmnm(5)s(2)U34. The chain is tRNA modification GTPase MnmE from Beijerinckia indica subsp. indica (strain ATCC 9039 / DSM 1715 / NCIMB 8712).